A 304-amino-acid polypeptide reads, in one-letter code: Acetaldehyde dehydrogenase 1 (304 aa).

11 to 14 (SGNI) lines the NAD(+) pocket. Cys-130 acts as the Acyl-thioester intermediate in catalysis. NAD(+) contacts are provided by residues 161-169 (SVGPGTRAN) and Asn-272.

The protein belongs to the acetaldehyde dehydrogenase family.

It carries out the reaction acetaldehyde + NAD(+) + CoA = acetyl-CoA + NADH + H(+). This is Acetaldehyde dehydrogenase 1 (lapF) from Azoarcus sp. (strain BH72).